The sequence spans 800 residues: Transducin beta-like protein 3 (800 aa).

Position 2 is an N-acetylalanine (alanine 2). 13 WD repeats span residues 64–105, 107–146, 149–190, 193–232, 245–284, 290–329, 332–372, 374–413, 419–459, 477–516, 519–560, 562–602, and 604–642; these read EDQE…RLWK, IHTA…GTHH, GSPG…CLAV, AHYS…TSRT, LPEE…CVYT, GLRQ…LQKQ, GYSE…CQIL, GHTD…QVAC, GHTH…PSKN, CHDK…LLGV, GHRR…KTFE, HDAS…RTLD, and HEDK…EQAE. A Glycyl lysine isopeptide (Lys-Gly) (interchain with G-Cter in SUMO2) cross-link involves residue lysine 407.

Part of the small subunit (SSU) processome, composed of more than 70 proteins and the RNA chaperone small nucleolar RNA (snoRNA) U3.

Its subcellular location is the nucleus. The protein resides in the nucleolus. Functionally, part of the small subunit (SSU) processome, first precursor of the small eukaryotic ribosomal subunit. During the assembly of the SSU processome in the nucleolus, many ribosome biogenesis factors, an RNA chaperone and ribosomal proteins associate with the nascent pre-rRNA and work in concert to generate RNA folding, modifications, rearrangements and cleavage as well as targeted degradation of pre-ribosomal RNA by the RNA exosome. This chain is Transducin beta-like protein 3 (Tbl3), found in Rattus norvegicus (Rat).